Here is a 235-residue protein sequence, read N- to C-terminus: UPF0502 protein Bcep18194_B0081 (235 aa).

Belongs to the UPF0502 family.

This chain is UPF0502 protein Bcep18194_B0081, found in Burkholderia lata (strain ATCC 17760 / DSM 23089 / LMG 22485 / NCIMB 9086 / R18194 / 383).